Reading from the N-terminus, the 317-residue chain is Aspartate carbamoyltransferase catalytic subunit (317 aa).

Residues Arg55 and Thr56 each contribute to the carbamoyl phosphate site. Lys83 provides a ligand contact to L-aspartate. Positions 105, 138, and 141 each coordinate carbamoyl phosphate. L-aspartate contacts are provided by Arg171 and Arg225. Carbamoyl phosphate contacts are provided by Gly266 and Pro267.

This sequence belongs to the aspartate/ornithine carbamoyltransferase superfamily. ATCase family. In terms of assembly, heterododecamer (2C3:3R2) of six catalytic PyrB chains organized as two trimers (C3), and six regulatory PyrI chains organized as three dimers (R2).

The enzyme catalyses carbamoyl phosphate + L-aspartate = N-carbamoyl-L-aspartate + phosphate + H(+). The protein operates within pyrimidine metabolism; UMP biosynthesis via de novo pathway; (S)-dihydroorotate from bicarbonate: step 2/3. Its function is as follows. Catalyzes the condensation of carbamoyl phosphate and aspartate to form carbamoyl aspartate and inorganic phosphate, the committed step in the de novo pyrimidine nucleotide biosynthesis pathway. The sequence is that of Aspartate carbamoyltransferase catalytic subunit from Mycobacteroides abscessus (strain ATCC 19977 / DSM 44196 / CCUG 20993 / CIP 104536 / JCM 13569 / NCTC 13031 / TMC 1543 / L948) (Mycobacterium abscessus).